A 275-amino-acid polypeptide reads, in one-letter code: Myb/SANT-like DNA-binding domain-containing protein 3 (275 aa).

One can recognise a Myb-like domain in the interval 13-78; that stretch reads FSELEKSILL…QLKKCWENIK (66 aa). Serine 96 and serine 98 each carry phosphoserine. Lysine 154 participates in a covalent cross-link: Glycyl lysine isopeptide (Lys-Gly) (interchain with G-Cter in SUMO2). Residues 211-247 adopt a coiled-coil conformation; that stretch reads QLIQMNEVHVAKIQQIERECEMAEEEHRIKMEVLNKK. Position 274 is a phosphoserine (serine 274).

This sequence belongs to the MSANTD3 family. Expressed in brain.

This Homo sapiens (Human) protein is Myb/SANT-like DNA-binding domain-containing protein 3 (MSANTD3).